Here is a 310-residue protein sequence, read N- to C-terminus: Protoheme IX farnesyltransferase (310 aa).

A run of 9 helical transmembrane segments spans residues 37–57 (LITV…DVLL), 64–84 (LTLL…CYLN), 113–133 (ILAL…IVNH), 134–154 (VAAV…TMWL), 159–181 (TINT…AAVT), 186–208 (IDAW…ALAM), 215–237 (RAAG…QIVW), 257–277 (MLVM…GLKI), and 290–310 (MFFF…LVSL).

This sequence belongs to the UbiA prenyltransferase family. Protoheme IX farnesyltransferase subfamily. Interacts with CtaA.

The protein localises to the cell membrane. The catalysed reaction is heme b + (2E,6E)-farnesyl diphosphate + H2O = Fe(II)-heme o + diphosphate. It functions in the pathway porphyrin-containing compound metabolism; heme O biosynthesis; heme O from protoheme: step 1/1. Functionally, converts heme B (protoheme IX) to heme O by substitution of the vinyl group on carbon 2 of heme B porphyrin ring with a hydroxyethyl farnesyl side group. The polypeptide is Protoheme IX farnesyltransferase (Exiguobacterium sibiricum (strain DSM 17290 / CCUG 55495 / CIP 109462 / JCM 13490 / 255-15)).